The chain runs to 563 residues: O-fucosyltransferase 14 (563 aa).

Residues 1 to 16 (MVKVSSSTTSSSSSSS) are compositionally biased toward low complexity. The tract at residues 1–25 (MVKVSSSTTSSSSSSSPDEESDLQN) is disordered. The helical; Signal-anchor for type II membrane protein transmembrane segment at 73–93 (IFIFLPIVIILIYLSTDFSNY) threads the bilayer. Residues Asn135, Asn140, and Asn339 are each glycosylated (N-linked (GlcNAc...) asparagine). Substrate-binding positions include 412-414 (HFR) and 528-529 (TF).

It belongs to the glycosyltransferase GT106 family.

The protein localises to the membrane. It participates in glycan metabolism. This Arabidopsis thaliana (Mouse-ear cress) protein is O-fucosyltransferase 14.